A 73-amino-acid chain; its full sequence is Large ribosomal subunit protein bL31 (73 aa).

Belongs to the bacterial ribosomal protein bL31 family. Type A subfamily. Part of the 50S ribosomal subunit.

Its function is as follows. Binds the 23S rRNA. This is Large ribosomal subunit protein bL31 from Rhizobium rhizogenes (strain K84 / ATCC BAA-868) (Agrobacterium radiobacter).